The primary structure comprises 635 residues: Membrane protein insertase YidC (635 aa).

The chain crosses the membrane as a helical span at residues 8–28; it reads LILAMVLSALVMLVWSIFFAP. The tract at residues 33 to 61 is disordered; sequence PAQDTPAASTQGTAQPEAGGPATPGAVPQ. 4 helical membrane-spanning segments follow: residues 396–416, 470–490, 528–548, and 564–584; these read MIGN…LLVF, LPVL…FVTI, SFLH…SMWM, and IFAW…SGLV. The disordered stretch occupies residues 615 to 635; the sequence is IRSSLPSRAKAGDKGGDKGGK. Over residues 624 to 635 the composition is skewed to basic and acidic residues; sequence KAGDKGGDKGGK.

Belongs to the OXA1/ALB3/YidC family. Type 1 subfamily. In terms of assembly, interacts with the Sec translocase complex via SecD. Specifically interacts with transmembrane segments of nascent integral membrane proteins during membrane integration.

It is found in the cell inner membrane. Its function is as follows. Required for the insertion and/or proper folding and/or complex formation of integral membrane proteins into the membrane. Involved in integration of membrane proteins that insert both dependently and independently of the Sec translocase complex, as well as at least some lipoproteins. Aids folding of multispanning membrane proteins. The chain is Membrane protein insertase YidC from Paracoccus denitrificans (strain Pd 1222).